The chain runs to 93 residues: Cell division topological specificity factor (93 aa).

Belongs to the MinE family.

In terms of biological role, prevents the cell division inhibition by proteins MinC and MinD at internal division sites while permitting inhibition at polar sites. This ensures cell division at the proper site by restricting the formation of a division septum at the midpoint of the long axis of the cell. In Alkaliphilus oremlandii (strain OhILAs) (Clostridium oremlandii (strain OhILAs)), this protein is Cell division topological specificity factor.